A 498-amino-acid chain; its full sequence is ATP synthase subunit alpha 1 (498 aa).

Residue 164 to 171 (GNRQSGKT) participates in ATP binding.

Belongs to the ATPase alpha/beta chains family. As to quaternary structure, F-type ATPases have 2 components, CF(1) - the catalytic core - and CF(0) - the membrane proton channel. CF(1) has five subunits: alpha(3), beta(3), gamma(1), delta(1), epsilon(1). CF(0) has three main subunits: a(1), b(2) and c(9-12). The alpha and beta chains form an alternating ring which encloses part of the gamma chain. CF(1) is attached to CF(0) by a central stalk formed by the gamma and epsilon chains, while a peripheral stalk is formed by the delta and b chains.

It localises to the cell membrane. It catalyses the reaction ATP + H2O + 4 H(+)(in) = ADP + phosphate + 5 H(+)(out). Functionally, produces ATP from ADP in the presence of a proton gradient across the membrane. The alpha chain is a regulatory subunit. The sequence is that of ATP synthase subunit alpha 1 from Listeria welshimeri serovar 6b (strain ATCC 35897 / DSM 20650 / CCUG 15529 / CIP 8149 / NCTC 11857 / SLCC 5334 / V8).